We begin with the raw amino-acid sequence, 245 residues long: Putative MSV199 domain-containing protein 146R (245 aa).

The GIY-YIG domain maps to 2 to 97; the sequence is RKGYIYVIEN…NTLHGKLKNL (96 aa).

In Acheta domesticus (House cricket), this protein is Putative MSV199 domain-containing protein 146R.